The following is a 320-amino-acid chain: Small ribosomal subunit protein uS2 (320 aa).

The span at 1-22 (MADETTTDTPDVQDEDAPDEDA) shows a compositional bias: acidic residues. Residues 1 to 83 (MADETTTDTP…SSSEEETSHR (83 aa)) form a disordered region. A compositionally biased stretch (low complexity) spans 27–41 (DDTASDSTGEAAAAD). Acidic residues-rich tracts occupy residues 42–57 (TDAD…EDAP) and 65–78 (DDGD…SSEE).

This sequence belongs to the universal ribosomal protein uS2 family.

This Salinibacter ruber (strain DSM 13855 / M31) protein is Small ribosomal subunit protein uS2.